We begin with the raw amino-acid sequence, 521 residues long: Transcription activator of gluconeogenesis SS1G_02293 (521 aa).

Over residues 1–12 (MSGETEIDDPEV) the composition is skewed to acidic residues. The interval 1–75 (MSGETEIDDP…KFDPKDPLRP (75 aa)) is disordered. 2 stretches are compositionally biased toward basic and acidic residues: residues 21-49 (YSDH…RPDG) and 65-74 (PKFDPKDPLR). The zn(2)-C6 fungal-type DNA-binding region spans 84 to 112 (CFACQRAHLTCGDERPCQRCIKRGLADAC). Disordered stretches follow at residues 273-308 (SGSA…NPPF), 322-358 (VAPP…RDPS), and 478-501 (NTGN…PRMR). Positions 275–287 (SAETPPQDSSAGM) are enriched in polar residues. 3 stretches are compositionally biased toward low complexity: residues 297-308 (NNNPAFNNNPPF), 337-351 (KSGP…SALG), and 480-494 (GNSG…GRGS). The PAS domain maps to 426 to 497 (TLFEYEDFML…GSSGRGSFTT (72 aa)).

It belongs to the ERT1/acuK family.

The protein localises to the nucleus. Functionally, transcription factor which regulates nonfermentable carbon utilization. Activator of gluconeogenetic genes. The sequence is that of Transcription activator of gluconeogenesis SS1G_02293 from Sclerotinia sclerotiorum (strain ATCC 18683 / 1980 / Ss-1) (White mold).